Reading from the N-terminus, the 582-residue chain is MKVRVYNIGGIVSPLEVELTKGVNIYKAPNAYGKTSLAKALVSLLTSAIKPDDLLNVFANSGYVELDLDGRTYYRRIKRVKNKIMESSKLLLDDDRALLLSYFSPENKLLNQIMSGEENVEWFISATSKINELKSKKEEMETKLHNLQAEIDDLNRKHKEAIELQTKIKQIEDEIARLEKEKESDKVLNKTTQTISITNENKLRDIKEKIEVKKRELEDLQNRIARLDQEIKNKESLASPEIRQSYERQLQEINAQLQKITAQRNEAEIEIRLLEKVLDQIRESEKQHLTTCYVCGSHVDPSIWKVRIDVISKELQEKNSLYAGIKKEADELLSKKSEIEKKLKELDQISSEISKLKMSRSELENRIESVKSTIDDLERQRREMEERFNRNAEIYRVYDINDSINKRIEELKKKKDEYEYELAINGIPSTILNKISEKQKELQEVQKMVDDLEKEYMRRLTIAREEFVKIANYLLKELEFDLRAEIDENDRLVVKRNDATLELRKLSSSERTTLALILVLTALKSYFKTPFFIVDESFMTFDQRRFDKIVKYLNSITDYVIITKSDENIELLKETMEPLASS.

Residue 28–35 (APNAYGKT) coordinates ATP. Positions 243–281 (RQSYERQLQEINAQLQKITAQRNEAEIEIRLLEKVLDQI) form a coiled coil. Positions 243-351 (RQSYERQLQE…KLKELDQISS (109 aa)) constitute a Zinc-hook domain. The Zn(2+) site is built by cysteine 292 and cysteine 295. Positions 320–351 (SLYAGIKKEADELLSKKSEIEKKLKELDQISS) form a coiled coil.

This Acidianus ambivalens (Desulfurolobus ambivalens) protein is Protein bps2 (bps2).